The sequence spans 257 residues: Snake venom serine proteinase 11 (257 aa).

Positions 1 to 18 are cleaved as a signal peptide; the sequence is MVLIRVLANLLILQLSYA. Positions 19-24 are excised as a propeptide; sequence QKSSEL. Residues 25–248 enclose the Peptidase S1 domain; it reads VVGGDECNIN…YTEWIQSIIT (224 aa). 6 disulfides stabilise this stretch: Cys31–Cys162, Cys49–Cys65, Cys97–Cys255, Cys141–Cys209, Cys173–Cys188, and Cys199–Cys224. Catalysis depends on charge relay system residues His64 and Asp109. Asn120 is a glycosylation site (N-linked (GlcNAc...) asparagine). The active-site Charge relay system is Ser203.

It belongs to the peptidase S1 family. Snake venom subfamily. In terms of assembly, monomer. In terms of tissue distribution, expressed by the venom gland.

It localises to the secreted. Functionally, snake venom serine protease that may act in the hemostasis system of the prey. This is Snake venom serine proteinase 11 from Crotalus adamanteus (Eastern diamondback rattlesnake).